The chain runs to 1114 residues: Isoleucine--tRNA ligase (1114 aa).

Positions 61–71 match the 'HIGH' region motif; it reads PTANGQPGTHH. The 'KMSKS' region signature appears at 640–644; sequence KMSKH. K643 contacts ATP.

It belongs to the class-I aminoacyl-tRNA synthetase family. IleS type 2 subfamily. As to quaternary structure, monomer. The cofactor is Zn(2+).

The protein resides in the cytoplasm. The enzyme catalyses tRNA(Ile) + L-isoleucine + ATP = L-isoleucyl-tRNA(Ile) + AMP + diphosphate. In terms of biological role, catalyzes the attachment of isoleucine to tRNA(Ile). As IleRS can inadvertently accommodate and process structurally similar amino acids such as valine, to avoid such errors it has two additional distinct tRNA(Ile)-dependent editing activities. One activity is designated as 'pretransfer' editing and involves the hydrolysis of activated Val-AMP. The other activity is designated 'posttransfer' editing and involves deacylation of mischarged Val-tRNA(Ile). The protein is Isoleucine--tRNA ligase of Cutibacterium acnes (strain DSM 16379 / KPA171202) (Propionibacterium acnes).